Here is a 94-residue protein sequence, read N- to C-terminus: Large ribosomal subunit protein bL27 (94 aa).

A propeptide spanning residues 1–9 (MNLANLQLF) is cleaved from the precursor. Positions 11–34 (HKKGGGSTSNGRDSQAKRLGAKAA) are disordered.

It belongs to the bacterial ribosomal protein bL27 family. Post-translationally, the N-terminus is cleaved by ribosomal processing cysteine protease Prp.

The sequence is that of Large ribosomal subunit protein bL27 from Streptococcus pyogenes serotype M3 (strain ATCC BAA-595 / MGAS315).